Consider the following 362-residue polypeptide: UDP-N-acetylglucosamine--N-acetylmuramyl-(pentapeptide) pyrophosphoryl-undecaprenol N-acetylglucosamine transferase (362 aa).

Residues 21 to 23, Asn-129, Arg-170, Ser-198, and Gln-290 each bind UDP-N-acetyl-alpha-D-glucosamine; that span reads TGG.

Belongs to the glycosyltransferase 28 family. MurG subfamily.

Its subcellular location is the cell inner membrane. The enzyme catalyses di-trans,octa-cis-undecaprenyl diphospho-N-acetyl-alpha-D-muramoyl-L-alanyl-D-glutamyl-meso-2,6-diaminopimeloyl-D-alanyl-D-alanine + UDP-N-acetyl-alpha-D-glucosamine = di-trans,octa-cis-undecaprenyl diphospho-[N-acetyl-alpha-D-glucosaminyl-(1-&gt;4)]-N-acetyl-alpha-D-muramoyl-L-alanyl-D-glutamyl-meso-2,6-diaminopimeloyl-D-alanyl-D-alanine + UDP + H(+). It participates in cell wall biogenesis; peptidoglycan biosynthesis. In terms of biological role, cell wall formation. Catalyzes the transfer of a GlcNAc subunit on undecaprenyl-pyrophosphoryl-MurNAc-pentapeptide (lipid intermediate I) to form undecaprenyl-pyrophosphoryl-MurNAc-(pentapeptide)GlcNAc (lipid intermediate II). In Synechococcus sp. (strain JA-3-3Ab) (Cyanobacteria bacterium Yellowstone A-Prime), this protein is UDP-N-acetylglucosamine--N-acetylmuramyl-(pentapeptide) pyrophosphoryl-undecaprenol N-acetylglucosamine transferase.